A 92-amino-acid chain; its full sequence is Phosphoribosyl-ATP pyrophosphatase (92 aa).

This sequence belongs to the PRA-PH family.

It localises to the cytoplasm. It catalyses the reaction 1-(5-phospho-beta-D-ribosyl)-ATP + H2O = 1-(5-phospho-beta-D-ribosyl)-5'-AMP + diphosphate + H(+). It functions in the pathway amino-acid biosynthesis; L-histidine biosynthesis; L-histidine from 5-phospho-alpha-D-ribose 1-diphosphate: step 2/9. This chain is Phosphoribosyl-ATP pyrophosphatase, found in Leptospira biflexa serovar Patoc (strain Patoc 1 / ATCC 23582 / Paris).